Consider the following 125-residue polypeptide: MASNTSFLFVTVTLLLVLNVSSRALPPVADSTNIAARLTGGGLMQCWDALYELKSCTNEIVLFFLNGETKLGYGCCNAVDVITTDCWPAMLTSLGFTLEETNVLRGFCQSPNSGGSSPALSPVKL.

The signal sequence occupies residues 1 to 24 (MASNTSFLFVTVTLLLVLNVSSRA).

This sequence belongs to the plant egg cell-secreted peptide family. As to expression, restricted to female reproductive tissues, specifically accumulating in storage vesicles of the unfertilized egg cell.

The protein resides in the cytoplasmic vesicle. Its subcellular location is the secreted. Its function is as follows. Involved in the regulation of gamete interactions during the double fertilization and to prevent multiple-pollen tube attraction; mediates the redistribution of the gamete fusogen HAP2/GCS1 to the cell surface after secretion upon sperm arrival. This Arabidopsis thaliana (Mouse-ear cress) protein is Egg cell-secreted protein 1.3 (EC1.3).